Reading from the N-terminus, the 1160-residue chain is Carbamoyl phosphate synthase arginine-specific large chain, mitochondrial (1160 aa).

Residues 81–478 (AEHEKVKKVV…SLQKALRQVD (398 aa)) are carboxyphosphate synthetic domain. R208, R248, G254, G255, K285, L287, E292, G318, I319, H320, Q361, and E375 together coordinate ATP. One can recognise an ATP-grasp 1 domain in the interval 212–404 (AKALNEINIP…LAYTAAKIAL (193 aa)). Mg(2+) contacts are provided by Q361, E375, and N377. Positions 361, 375, and 377 each coordinate Mn(2+). The tract at residues 479–623 (PSFLGFMAMP…YTSYNASSHD (145 aa)) is oligomerization domain. The tract at residues 624–1012 (IDFNEHGTMV…AYWAALQSTQ (389 aa)) is carbamoyl phosphate synthetic domain. The region spanning 748-946 (SQILDKIGVD…FIDVATRSII (199 aa)) is the ATP-grasp 2 domain. ATP contacts are provided by R784, K823, I825, E830, G855, V856, H857, S858, Q898, and E917. Residues Q898, E917, and N919 each contribute to the Mg(2+) site. Mn(2+) is bound by residues Q898, E917, and N919. The tract at residues 1013–1144 (NFKIPLPGQG…PSVLSEKKEM (132 aa)) is allosteric domain. One can recognise an MGS-like domain in the interval 1014 to 1160 (FKIPLPGQGI…WSEWIGSHDL (147 aa)).

It belongs to the CarB family. As to quaternary structure, heterodimer composed of 2 chains; the small (or glutamine) chain promotes the hydrolysis of glutamine to ammonia, which is used by the large (or ammonia) chain to synthesize carbamoyl phosphate. Mg(2+) is required as a cofactor. It depends on Mn(2+) as a cofactor.

The protein localises to the mitochondrion. It catalyses the reaction hydrogencarbonate + L-glutamine + 2 ATP + H2O = carbamoyl phosphate + L-glutamate + 2 ADP + phosphate + 2 H(+). The catalysed reaction is hydrogencarbonate + NH4(+) + 2 ATP = carbamoyl phosphate + 2 ADP + phosphate + 2 H(+). It functions in the pathway amino-acid biosynthesis; L-arginine biosynthesis; carbamoyl phosphate from bicarbonate: step 1/1. Large subunit of the arginine-specific carbamoyl phosphate synthase (CPSase). CPSase catalyzes the formation of carbamoyl phosphate from the ammonia moiety of glutamine, hydrogencarbonate, and phosphate donated by ATP, the first step of the arginine biosynthetic pathway. The large subunit (synthetase) binds the substrates ammonia (free or transferred from glutamine from the small subunit), hydrogencarbonate and ATP and carries out an ATP-coupled ligase reaction, activating hydrogencarbonate by forming carboxy phosphate which reacts with ammonia to form carbamoyl phosphate. This is Carbamoyl phosphate synthase arginine-specific large chain, mitochondrial (arg4) from Schizosaccharomyces pombe (strain 972 / ATCC 24843) (Fission yeast).